The primary structure comprises 270 residues: ES1 protein, mitochondrial (270 aa).

Expressed specifically in the inner segments of cone photoreceptor cells of the retina (at protein level).

Its subcellular location is the mitochondrion. Plays a role in promoting mitochondrial enlargement in cone photoreceptor cells in a fusion-independent and ATP-dependent manner. The sequence is that of ES1 protein, mitochondrial from Danio rerio (Zebrafish).